A 93-amino-acid chain; its full sequence is Large ribosomal subunit protein uL23 (93 aa).

Belongs to the universal ribosomal protein uL23 family. Part of the 50S ribosomal subunit. Contacts protein L29, and trigger factor when it is bound to the ribosome.

In terms of biological role, one of the early assembly proteins it binds 23S rRNA. One of the proteins that surrounds the polypeptide exit tunnel on the outside of the ribosome. Forms the main docking site for trigger factor binding to the ribosome. The protein is Large ribosomal subunit protein uL23 of Campylobacter fetus subsp. fetus (strain 82-40).